The chain runs to 628 residues: Junctophilin-4 (628 aa).

The Cytoplasmic segment spans residues 1 to 606 (MSPGGKFDFD…RPAQPGAANP (606 aa)). MORN repeat units follow at residues 50–72 (LGVF…KREG), 74–95 (GVER…KGRS), 96–117 (GVWE…FQDG), 118–140 (YGTE…KRHG), 141–163 (YGVR…RTSL), and 164–186 (DSGH…EGGS). 2 disordered regions span residues 158–214 (PRRT…RTPA) and 231–276 (GGRR…LIEG). Residues 170–179 (PPTPPPPLPL) are compositionally biased toward pro residues. Composition is skewed to low complexity over residues 231–241 (GGRRSSLGSKR) and 253–272 (GSTG…APPA). 2 MORN repeats span residues 317 to 339 (YGRT…RLVH) and 340 to 362 (GGRV…KVDR). The interval 415-602 (DLQPMLEAPG…AATERPAQPG (188 aa)) is disordered. Residues 432–443 (EGSDTEPLDEDS) are compositionally biased toward acidic residues. Composition is skewed to low complexity over residues 453 to 467 (PSEG…PASS) and 528 to 541 (GSPL…SSGS). The helical; Anchor for type IV membrane protein transmembrane segment at 607–628 (LVVGAVALLDLSLAFLFSQLLT) threads the bilayer.

It belongs to the junctophilin family.

The protein resides in the cell membrane. It is found in the endoplasmic reticulum membrane. Junctophilins contribute to the formation of junctional membrane complexes (JMCs) which link the plasma membrane with the endoplasmic or sarcoplasmic reticulum in excitable cells. Provides a structural foundation for functional cross-talk between the cell surface and intracellular calcium release channels. JPH4 is brain-specific and appears to have an active role in certain neurons involved in motor coordination and memory. The sequence is that of Junctophilin-4 (JPH4) from Homo sapiens (Human).